Here is a 520-residue protein sequence, read N- to C-terminus: GMP synthase [glutamine-hydrolyzing] (520 aa).

The Glutamine amidotransferase type-1 domain maps to lysine 12–aspartate 205. The Nucleophile role is filled by cysteine 89. Catalysis depends on residues histidine 179 and glutamate 181. In terms of domain architecture, GMPS ATP-PPase spans tryptophan 206 to arginine 395. Serine 233–serine 239 lines the ATP pocket.

As to quaternary structure, homodimer.

The catalysed reaction is XMP + L-glutamine + ATP + H2O = GMP + L-glutamate + AMP + diphosphate + 2 H(+). Its pathway is purine metabolism; GMP biosynthesis; GMP from XMP (L-Gln route): step 1/1. Catalyzes the synthesis of GMP from XMP. The chain is GMP synthase [glutamine-hydrolyzing] from Streptococcus agalactiae serotype III (strain NEM316).